The following is a 916-amino-acid chain: Protein prickle (916 aa).

2 disordered regions span residues 49 to 105 and 127 to 176; these read PLSP…AGGS and QHLQ…IPVD. A compositionally biased stretch (low complexity) spans 145-156; it reads SSPSPALSSSIT. The segment covering 157-171 has biased composition (gly residues); the sequence is TGGGGVTRGGGGGGH. One can recognise a PET domain in the interval 167 to 275; the sequence is GGGGHIIPVD…TVKQLATNQI (109 aa). LIM zinc-binding domains follow at residues 274–338, 339–399, and 400–462; these read QICD…ETLK, PRCS…MFAE, and YCDF…GEPP. Disordered stretches follow at residues 460–593, 635–671, 692–725, and 763–870; these read EPPT…PNHR, VIPGPSIAKTNPALTSSMPELSQSLQQQQQQQQQPQS, DAIQNASDDASHSIVELPTPPPIVSNTRDPENLP, and RSKS…DTVY. 3 stretches are compositionally biased toward polar residues: residues 507–517, 526–569, and 642–654; these read SPISERSTPHS, EMST…SRTL, and AKTNPALTSSMPE. Positions 655-671 are enriched in low complexity; sequence LSQSLQQQQQQQQQPQS. Over residues 777–793 the composition is skewed to basic residues; sequence RSSKSKRRSSHHHQHHR. The segment covering 796–805 has biased composition (low complexity); sequence GESSSYSGTS. Basic and acidic residues predominate over residues 829 to 844; sequence VPDVEFIEHQDHHRGD. Over residues 852 to 867 the composition is skewed to low complexity; it reads RSVCSTCSSSSSSADD.

The protein belongs to the prickle / espinas / testin family. As to quaternary structure, interacts with dsh; PET and LIM domains interact with dsh DEP domain, in wing cells. Interacts with Vang in photoreceptor cells.

It is found in the cell membrane. Functionally, acts in a planar cell polarity (PCP) complex; polarization along the apical/basal axis of epithelial cells. PCP signaling in the wing disk requires the receptor fz and the cytoplasmic proteins dsh and pk. These act in a feedback loop leading to activation of the jnk cascade and subsequent polarized arrangement of hairs and bristles. Dgo and pk compete with one another for dsh binding, thereby modulating fz dsh activity and ensuring tight control over fz PCP signaling. Vang, stan and pk function together to regulate the establishment of tissue polarity in the adult eye. This Aedes aegypti (Yellowfever mosquito) protein is Protein prickle.